Reading from the N-terminus, the 61-residue chain is Lens epithelial cell protein LEP503 (61 aa).

In terms of tissue distribution, preferentially expressed in the lens epithelial cells.

In Rattus norvegicus (Rat), this protein is Lens epithelial cell protein LEP503 (Lenep).